A 241-amino-acid polypeptide reads, in one-letter code: MNMDQLKRQAAARALEEVRDGMQLGLGTGSTAKHFVELLGERVAAGLKVIGVPTSEATRLDATRCGVPLTTLDEIDHLDITVDGADEIDPELNLIKGGGGALLREKIVAAASDRMIVIADDTKWVPTLGRFPLPIEVIPFGLGATRRAIETAFAQCGVSGQMAVRKAKGGDKDGHVFVTDGGHWILDAQLGRIVDPPSLAKALSAIPGVVEHGLFIGLASSAVLAGGEGIRVIERRKPKGD.

Substrate is bound by residues 28–31 (TGST), 83–86 (DGAD), and 96–99 (KGGG). E105 functions as the Proton acceptor in the catalytic mechanism. Substrate is bound at residue K123.

The protein belongs to the ribose 5-phosphate isomerase family. In terms of assembly, homodimer.

It catalyses the reaction aldehydo-D-ribose 5-phosphate = D-ribulose 5-phosphate. It participates in carbohydrate degradation; pentose phosphate pathway; D-ribose 5-phosphate from D-ribulose 5-phosphate (non-oxidative stage): step 1/1. In terms of biological role, catalyzes the reversible conversion of ribose-5-phosphate to ribulose 5-phosphate. This Bradyrhizobium diazoefficiens (strain JCM 10833 / BCRC 13528 / IAM 13628 / NBRC 14792 / USDA 110) protein is Ribose-5-phosphate isomerase A.